A 348-amino-acid polypeptide reads, in one-letter code: MSSSPEKKRRKKLSPESNSLPNDLIVTILARLSQSYYPKLSLVSKTFRAILASPELYQTRILLSRTETFLYVCLSFPGEPNPGWFTLYRKPNQTLTTKKKKNSVHLLAPILNSPPVEFPSLIAVGSYLYAFRAAIEEGTSDSLNCVEVYNTDTQTWIPVPPNKRIFKLQHMKGMLYMKVSKLLSFVAQDAEELAPLFPKLRSLLSTEVVAFKPKVSEGYEVLGFSVNTDLGRGSFCMIEEITYHYDPSVKFRWRRRQGGVWRSLVGLEGLPKFARYSSVKLADCGGKLVVLWHKYVPASGYEEKMVWCAEISLEKRSKKEIWGKIEWFDAVLRVPKYYQFVGAKSATV.

An F-box domain is found at 14-60 (SPESNSLPNDLIVTILARLSQSYYPKLSLVSKTFRAILASPELYQTR).

The polypeptide is F-box protein At2g20380 (Arabidopsis thaliana (Mouse-ear cress)).